The following is a 142-amino-acid chain: Large ribosomal subunit protein uL13 (142 aa).

Belongs to the universal ribosomal protein uL13 family. Part of the 50S ribosomal subunit.

Functionally, this protein is one of the early assembly proteins of the 50S ribosomal subunit, although it is not seen to bind rRNA by itself. It is important during the early stages of 50S assembly. In Citrobacter koseri (strain ATCC BAA-895 / CDC 4225-83 / SGSC4696), this protein is Large ribosomal subunit protein uL13.